A 369-amino-acid chain; its full sequence is Opsin Rh6 (369 aa).

Topologically, residues 1 to 46 (MASLHPPSFAYMRDGRNLSLAESVPAEIMHMVDPYWYQWPPLEPMW) are extracellular. The N-linked (GlcNAc...) asparagine glycan is linked to Asn17. Residues 47 to 71 (FGIIGFVIAILGTMSLAGNFIVMYI) traverse the membrane as a helical segment. Over 72-83 (FTSSKGLRTPSN) the chain is Cytoplasmic. A helical membrane pass occupies residues 84–109 (MFVVNLAFSDFMMMFTMFPPVVLNGF). The Extracellular portion of the chain corresponds to 110-123 (YGTWIMGPFLCELY). A disulfide bridge links Cys120 with Cys197. The chain crosses the membrane as a helical span at residues 124–143 (GMFGSLFGCVSIWSMTLIAY). Residues 144–162 (DRYCVIVKGMARKPLTATA) are Cytoplasmic-facing. A helical transmembrane segment spans residues 163–186 (AVLRLMVVWTICGAWALMPLFGWN). At 187 to 210 (RYVPEGNMTACGTDYFAKDWWNRS) the chain is on the extracellular side. Asn193 and Asn208 each carry an N-linked (GlcNAc...) asparagine glycan. The chain crosses the membrane as a helical span at residues 211 to 238 (YIIVYSLWVYLTPLLTIIFSYWHIMKAV). Topologically, residues 239 to 274 (AAHEKAMREQAKKMNVASLRNSEADKSKAIEIKLAK) are cytoplasmic. A helical membrane pass occupies residues 275-298 (VALTTISLWFFAWTPYTIINYAGI). At 299–305 (FESMHLS) the chain is on the extracellular side. Residues 306 to 330 (PLSTICGSVFAKANAVCNPIVYGLS) traverse the membrane as a helical segment. The residue at position 317 (Lys317) is an N6-(retinylidene)lysine. The Cytoplasmic portion of the chain corresponds to 331–369 (HPKYKQVLREKMPCLACGKDDLTSDSRTQATAEISESQA).

This sequence belongs to the G-protein coupled receptor 1 family. Opsin subfamily. Phosphorylated on some or all of the serine and threonine residues present in the C-terminal region. As to expression, each Drosophila eye is composed of 800 facets or ommatidia. Each ommatidium contains 8 photoreceptor cells (R1-R8), the R1 to R6 cells are outer cells, while R7 and R8 are inner cells. Rh6 is expressed in a subset of R8 cells, most likely expressed in the subset of R8 cells paired with Rh4-expressing R7 cells (R7y).

The protein localises to the membrane. Functionally, visual pigments are the light-absorbing molecules that mediate vision. They consist of an apoprotein, opsin, covalently linked to cis-retinal. This Drosophila melanogaster (Fruit fly) protein is Opsin Rh6 (Rh6).